A 165-amino-acid polypeptide reads, in one-letter code: Histone H1 (165 aa).

Positions 1–165 (GKQSTSKSVT…KKATKGSKKN (165 aa)) are disordered. Residues 9 to 18 (VTREKKDVKK) are compositionally biased toward basic and acidic residues. The span at 20-31 (VAPKKAIKKVTK) shows a compositional bias: basic residues. The segment covering 32 to 41 (KSTTPVKTSK) has biased composition (low complexity). A phosphothreonine mark is found at Thr-48 and Thr-54. The segment covering 68–89 (TMKESVSDAKKTVHKSAGDKKL) has biased composition (basic and acidic residues). The residue at position 83 (Ser-83) is a Phosphoserine. Over residues 103 to 117 (KIVHPAKKAAAKPKT) the composition is skewed to basic residues. Residue Thr-117 is modified to Phosphothreonine. A compositionally biased stretch (basic and acidic residues) spans 118–157 (AKKEVKKDTKPVKKDAKKDTKPVKKDAKKDTKPAKKDTKK).

Cell-growth/division-associated phosphorylation by a CDC2-like kinase. Is additionally phosphorylated on either Ser-33, Thr-34 or Thr-35, and on either Thr-39 or Ser-40.

It is found in the nucleus. The protein localises to the chromosome. Its function is as follows. Histones H1 are necessary for the condensation of nucleosome chains into higher-order structures. The polypeptide is Histone H1 (HHO) (Tetrahymena pyriformis).